The primary structure comprises 101 residues: Phosphoribosyl-AMP cyclohydrolase (101 aa).

Residue D71 participates in Mg(2+) binding. Position 72 (C72) interacts with Zn(2+). The Mg(2+) site is built by D73 and D75. Residues C88 and C95 each contribute to the Zn(2+) site.

This sequence belongs to the PRA-CH family. Homodimer. Mg(2+) is required as a cofactor. The cofactor is Zn(2+).

It localises to the cytoplasm. The enzyme catalyses 1-(5-phospho-beta-D-ribosyl)-5'-AMP + H2O = 1-(5-phospho-beta-D-ribosyl)-5-[(5-phospho-beta-D-ribosylamino)methylideneamino]imidazole-4-carboxamide. Its pathway is amino-acid biosynthesis; L-histidine biosynthesis; L-histidine from 5-phospho-alpha-D-ribose 1-diphosphate: step 3/9. Functionally, catalyzes the hydrolysis of the adenine ring of phosphoribosyl-AMP. The protein is Phosphoribosyl-AMP cyclohydrolase of Bacillus cereus (strain Q1).